The primary structure comprises 77 residues: Putative defensin-like protein 187 (77 aa).

A signal peptide spans 1–19 (MKNSSIMFVLIVVFLISSS). 3 disulfides stabilise this stretch: Cys31/Cys77, Cys43/Cys71, and Cys47/Cys73.

It belongs to the DEFL family.

The protein resides in the secreted. This Arabidopsis thaliana (Mouse-ear cress) protein is Putative defensin-like protein 187 (LCR42).